The sequence spans 141 residues: Hemoglobin subunit alpha (141 aa).

In terms of domain architecture, Globin spans 1-141 (VLSPADKSNV…VSTVLTSKYR (141 aa)). S3 is modified (phosphoserine). Residues K7 and K11 each carry the N6-succinyllysine modification. N6-acetyllysine; alternate is present on K16. The residue at position 16 (K16) is an N6-succinyllysine; alternate. Y24 carries the post-translational modification Phosphotyrosine. A Phosphoserine modification is found at S35. Position 40 is an N6-succinyllysine (K40). S49 carries the phosphoserine modification. H58 is a binding site for O2. Position 87 (H87) interacts with heme b. S102 carries the post-translational modification Phosphoserine. T108 carries the phosphothreonine modification. A phosphoserine mark is found at S124 and S131. 2 positions are modified to phosphothreonine: T134 and T137. S138 is subject to Phosphoserine.

Belongs to the globin family. As to quaternary structure, heterotetramer of two alpha chains and two beta chains. Red blood cells.

Involved in oxygen transport from the lung to the various peripheral tissues. In terms of biological role, hemopressin acts as an antagonist peptide of the cannabinoid receptor CNR1. Hemopressin-binding efficiently blocks cannabinoid receptor CNR1 and subsequent signaling. The chain is Hemoglobin subunit alpha (HBA) from Saguinus mystax (Moustached tamarin).